The sequence spans 85 residues: Small ribosomal subunit protein bS18 (85 aa).

The protein belongs to the bacterial ribosomal protein bS18 family. Part of the 30S ribosomal subunit. Forms a tight heterodimer with protein bS6.

Its function is as follows. Binds as a heterodimer with protein bS6 to the central domain of the 16S rRNA, where it helps stabilize the platform of the 30S subunit. In Solidesulfovibrio magneticus (strain ATCC 700980 / DSM 13731 / RS-1) (Desulfovibrio magneticus), this protein is Small ribosomal subunit protein bS18.